Reading from the N-terminus, the 374-residue chain is Putative cullin-like protein 2 (374 aa).

It belongs to the cullin family.

The sequence is that of Putative cullin-like protein 2 from Arabidopsis thaliana (Mouse-ear cress).